The following is a 195-amino-acid chain: dCTP deaminase (195 aa).

Residues Arg-105–Arg-110, Asp-123, Thr-131–Glu-133, Gln-152, Tyr-166, Lys-173, and Gln-177 contribute to the dCTP site. Glu-133 functions as the Proton donor/acceptor in the catalytic mechanism. The tract at residues Lys-159–Gln-195 is disordered. Residues Ser-160 to Ser-172 are compositionally biased toward basic and acidic residues. Residues Tyr-174–Arg-184 show a composition bias toward polar residues. Residues Gln-186–Gln-195 show a composition bias toward basic and acidic residues.

It belongs to the dCTP deaminase family. As to quaternary structure, homotrimer.

The catalysed reaction is dCTP + H2O + H(+) = dUTP + NH4(+). It participates in pyrimidine metabolism; dUMP biosynthesis; dUMP from dCTP (dUTP route): step 1/2. Functionally, catalyzes the deamination of dCTP to dUTP. This chain is dCTP deaminase, found in Natronomonas pharaonis (strain ATCC 35678 / DSM 2160 / CIP 103997 / JCM 8858 / NBRC 14720 / NCIMB 2260 / Gabara) (Halobacterium pharaonis).